A 320-amino-acid chain; its full sequence is Acetyl-coenzyme A carboxylase carboxyl transferase subunit alpha (320 aa).

The region spanning Lys-41–Glu-295 is the CoA carboxyltransferase C-terminal domain.

This sequence belongs to the AccA family. As to quaternary structure, acetyl-CoA carboxylase is a heterohexamer composed of biotin carboxyl carrier protein (AccB), biotin carboxylase (AccC) and two subunits each of ACCase subunit alpha (AccA) and ACCase subunit beta (AccD).

The protein localises to the cytoplasm. The catalysed reaction is N(6)-carboxybiotinyl-L-lysyl-[protein] + acetyl-CoA = N(6)-biotinyl-L-lysyl-[protein] + malonyl-CoA. It functions in the pathway lipid metabolism; malonyl-CoA biosynthesis; malonyl-CoA from acetyl-CoA: step 1/1. Its function is as follows. Component of the acetyl coenzyme A carboxylase (ACC) complex. First, biotin carboxylase catalyzes the carboxylation of biotin on its carrier protein (BCCP) and then the CO(2) group is transferred by the carboxyltransferase to acetyl-CoA to form malonyl-CoA. In Rhodopseudomonas palustris (strain ATCC BAA-98 / CGA009), this protein is Acetyl-coenzyme A carboxylase carboxyl transferase subunit alpha.